The sequence spans 172 residues: Putative acetyltransferase YvoF (172 aa).

The protein belongs to the transferase hexapeptide repeat family.

This is Putative acetyltransferase YvoF (yvoF) from Bacillus subtilis (strain 168).